Here is a 519-residue protein sequence, read N- to C-terminus: Ribonuclease Y (519 aa).

The helical transmembrane segment at 3–23 threads the bilayer; sequence LIEIVLLLVGMAVGAATGFIL. A KH domain is found at 209–272; sequence TVTAVSLPSE…QIAKMALERL (64 aa). The 94-residue stretch at 335–428 folds into the HD domain; that stretch reads VLQHSMEVAS…VQAADSLSGA (94 aa).

Belongs to the RNase Y family.

The protein localises to the cell membrane. In terms of biological role, endoribonuclease that initiates mRNA decay. The chain is Ribonuclease Y from Oleidesulfovibrio alaskensis (strain ATCC BAA-1058 / DSM 17464 / G20) (Desulfovibrio alaskensis).